The sequence spans 452 residues: NADH-cytochrome b5 reductase-like protein alnC (452 aa).

One can recognise a Cytochrome b5 heme-binding domain in the interval 4–80 (PASITLAEVA…LKTLLVGSLQ (77 aa)). Residue 33 to 38 (AEYRED) coordinates FMN. Heme is bound by residues H39 and H63. Residues 80-83 (QSKT) and 116-125 (NDTSKYGQLP) each bind FMN. 2 helical membrane passes run 120–140 (KYGQ…FFTL) and 166–186 (VGFL…ATFV). The FAD-binding FR-type domain occupies 225-324 (NTQQFLTLVD…RGPFGRYSPS (100 aa)). 302-305 (YLLN) provides a ligand contact to FAD. NADP(+) is bound by residues 389 to 390 (GQ) and 395 to 399 (WKGLR).

Belongs to the flavoprotein pyridine nucleotide cytochrome reductase family. The cofactor is FAD. FMN is required as a cofactor.

Its subcellular location is the membrane. It functions in the pathway polyketide biosynthesis. In terms of biological role, NADH-cytochrome b5 reductase-like protein; part of the gene cluster that mediates the biosynthesis of asperlin, a polyketide showing anti-inflammatory, antitumor and antibiotic activities. The first step of the asperlin biosynthesis is the production of the intermediate 2,4,6-octatrienoic acid by the highly redusing polyketide synthase alnA with cleavage of the PKS product by the esterase alnB. 2,4,6-octatrienoic acid is further converted to asperlin via several steps involving the remaining enzymes from the cluster. The chain is NADH-cytochrome b5 reductase-like protein alnC from Emericella nidulans (strain FGSC A4 / ATCC 38163 / CBS 112.46 / NRRL 194 / M139) (Aspergillus nidulans).